A 265-amino-acid chain; its full sequence is tRNA pseudouridine synthase A (265 aa).

D55 serves as the catalytic Nucleophile. Y113 serves as a coordination point for substrate.

This sequence belongs to the tRNA pseudouridine synthase TruA family. In terms of assembly, homodimer.

It catalyses the reaction uridine(38/39/40) in tRNA = pseudouridine(38/39/40) in tRNA. Functionally, formation of pseudouridine at positions 38, 39 and 40 in the anticodon stem and loop of transfer RNAs. The polypeptide is tRNA pseudouridine synthase A (Levilactobacillus brevis (strain ATCC 367 / BCRC 12310 / CIP 105137 / JCM 1170 / LMG 11437 / NCIMB 947 / NCTC 947) (Lactobacillus brevis)).